The sequence spans 277 residues: uncharacterized protein (277 aa).

Disordered regions lie at residues 1-103 (PPLR…LEDP) and 254-277 (PSPSSAPHATSRRPHTQLQVSPPR). A compositionally biased stretch (basic and acidic residues) spans 48 to 65 (RRNDTGKDRGTHRQRAET). Residues 66–77 (PSRSPVPTTNTV) are compositionally biased toward polar residues. Basic residues predominate over residues 82–91 (PAVRRQRRTQ).

This is an uncharacterized protein from Homo sapiens (Human).